The primary structure comprises 553 residues: Urocanate hydratase (553 aa).

NAD(+) is bound by residues 45 to 46, Gln123, 169 to 171, Asp189, Arg194, 235 to 236, 256 to 260, 266 to 267, Tyr315, and Gly485; these read GG, GMG, NA, QTSAH, and YV.

The protein belongs to the urocanase family. NAD(+) serves as cofactor.

It localises to the cytoplasm. The catalysed reaction is 4-imidazolone-5-propanoate = trans-urocanate + H2O. Its pathway is amino-acid degradation; L-histidine degradation into L-glutamate; N-formimidoyl-L-glutamate from L-histidine: step 2/3. Its function is as follows. Catalyzes the conversion of urocanate to 4-imidazolone-5-propionate. This is Urocanate hydratase from Staphylococcus aureus (strain Mu50 / ATCC 700699).